Consider the following 301-residue polypeptide: Probable alpha-L-glutamate ligase (301 aa).

One can recognise an ATP-grasp domain in the interval Leu-104–Glu-287. ATP is bound by residues Lys-141, Glu-178 to Tyr-179, Asp-187, and Arg-211 to Asn-213. The Mg(2+) site is built by Asp-248, Glu-260, and Asn-262. Asp-248, Glu-260, and Asn-262 together coordinate Mn(2+).

The protein belongs to the RimK family. Requires Mg(2+) as cofactor. The cofactor is Mn(2+).

The sequence is that of Probable alpha-L-glutamate ligase from Pseudomonas savastanoi pv. phaseolicola (strain 1448A / Race 6) (Pseudomonas syringae pv. phaseolicola (strain 1448A / Race 6)).